The sequence spans 62 residues: Large ribosomal subunit protein bL28 (62 aa).

It belongs to the bacterial ribosomal protein bL28 family.

The polypeptide is Large ribosomal subunit protein bL28 (Streptococcus gordonii (strain Challis / ATCC 35105 / BCRC 15272 / CH1 / DL1 / V288)).